The primary structure comprises 939 residues: Protein translocase subunit SecA 1 (939 aa).

Residues Q85, 103–107 (GEGKT), and D504 contribute to the ATP site. The tract at residues 848–939 (EVPVEDEKPS…QSKGGRRRKK (92 aa)) is disordered. 3 stretches are compositionally biased toward basic and acidic residues: residues 852-863 (EDEKPSLEKEDA), 872-889 (PEIR…DRLH), and 914-925 (PVRSEADGLTRA). The span at 926–939 (ERRKQSKGGRRRKK) shows a compositional bias: basic residues.

This sequence belongs to the SecA family. In terms of assembly, monomer and homodimer. Part of the essential Sec protein translocation apparatus which comprises SecA, SecYEG and auxiliary proteins SecDF. Other proteins may also be involved.

The protein resides in the cell membrane. The protein localises to the cytoplasm. It catalyses the reaction ATP + H2O + cellular proteinSide 1 = ADP + phosphate + cellular proteinSide 2.. Functionally, part of the Sec protein translocase complex. Interacts with the SecYEG preprotein conducting channel. Has a central role in coupling the hydrolysis of ATP to the transfer of proteins into and across the cell membrane, serving as an ATP-driven molecular motor driving the stepwise translocation of polypeptide chains across the membrane. This is Protein translocase subunit SecA 1 from Streptomyces avermitilis (strain ATCC 31267 / DSM 46492 / JCM 5070 / NBRC 14893 / NCIMB 12804 / NRRL 8165 / MA-4680).